A 575-amino-acid polypeptide reads, in one-letter code: Mitochondrial 2-methylisocitrate lyase ICL2 (575 aa).

Cys238 is an active-site residue.

The protein belongs to the isocitrate lyase/PEP mutase superfamily. Isocitrate lyase family.

It is found in the mitochondrion matrix. It carries out the reaction (2S,3R)-3-hydroxybutane-1,2,3-tricarboxylate = pyruvate + succinate. It participates in organic acid metabolism; propanoate degradation. Catalyzes the formation of pyruvate and succinate from 2-methylisocitrate during the metabolism of endogenous propionyl-CoA. Does not act on isocitrate. The polypeptide is Mitochondrial 2-methylisocitrate lyase ICL2 (ICL2) (Saccharomyces cerevisiae (strain ATCC 204508 / S288c) (Baker's yeast)).